Reading from the N-terminus, the 225-residue chain is Protein-L-isoaspartate O-methyltransferase (225 aa).

Serine 75 is an active-site residue.

The protein belongs to the methyltransferase superfamily. L-isoaspartyl/D-aspartyl protein methyltransferase family.

The protein localises to the cytoplasm. It carries out the reaction [protein]-L-isoaspartate + S-adenosyl-L-methionine = [protein]-L-isoaspartate alpha-methyl ester + S-adenosyl-L-homocysteine. Its function is as follows. Catalyzes the methyl esterification of L-isoaspartyl residues in peptides and proteins that result from spontaneous decomposition of normal L-aspartyl and L-asparaginyl residues. It plays a role in the repair and/or degradation of damaged proteins. This Xanthomonas oryzae pv. oryzae (strain PXO99A) protein is Protein-L-isoaspartate O-methyltransferase.